A 186-amino-acid chain; its full sequence is MSHSLAEHYHEILVGIGENPQREGLLDTPRRAAKAMQYLCNGYAQDLHEVVNGALFESENDEMIVVRDIELYSLCEHHMLPFIGKAHVAYLPTGRVLGLSKVARVVDMFARRLQIQENLTRQIAYAVQEVTDAAGVGVVIEAKHMCMMMRGVEKQNSVMISSVMLGAFRDAPSTRHEFLNLIGRHN.

The protein belongs to the GTP cyclohydrolase I family. As to quaternary structure, homomer.

The catalysed reaction is GTP + H2O = 7,8-dihydroneopterin 3'-triphosphate + formate + H(+). The protein operates within cofactor biosynthesis; 7,8-dihydroneopterin triphosphate biosynthesis; 7,8-dihydroneopterin triphosphate from GTP: step 1/1. This is GTP cyclohydrolase 1 2 from Pseudomonas putida (strain ATCC 47054 / DSM 6125 / CFBP 8728 / NCIMB 11950 / KT2440).